The following is a 460-amino-acid chain: Centrosomal protein CEP57L1 (460 aa).

Serine 49 carries the post-translational modification Phosphoserine. 2 coiled-coil regions span residues 51–228 and 317–384; these read NSQA…EISK and ISIC…LKKH. The segment covering 399-410 has biased composition (polar residues); it reads KMSEASGIQQED. Residues 399 to 423 form a disordered region; that stretch reads KMSEASGIQQEDSYPKGSKNIKNSP.

Belongs to the translokin family.

Its subcellular location is the cytoplasm. It localises to the cytoskeleton. The protein resides in the microtubule organizing center. The protein localises to the centrosome. In terms of biological role, centrosomal protein which may be required for microtubule attachment to centrosomes. This Homo sapiens (Human) protein is Centrosomal protein CEP57L1 (CEP57L1).